A 191-amino-acid polypeptide reads, in one-letter code: dCTP deaminase, dUMP-forming (191 aa).

DCTP is bound by residues 101–106 (KSSLGR), aspartate 119, 127–129 (TLE), glutamine 148, tyrosine 162, and glutamine 174. Residue glutamate 129 is the Proton donor/acceptor of the active site. Positions 163–191 (GSPVYGSRYQGQRGPTPSRSWQNFHRTKI) are disordered. The span at 171 to 191 (YQGQRGPTPSRSWQNFHRTKI) shows a compositional bias: polar residues.

It belongs to the dCTP deaminase family. As to quaternary structure, homotrimer.

The catalysed reaction is dCTP + 2 H2O = dUMP + NH4(+) + diphosphate. It functions in the pathway pyrimidine metabolism; dUMP biosynthesis; dUMP from dCTP: step 1/1. In terms of biological role, bifunctional enzyme that catalyzes both the deamination of dCTP to dUTP and the hydrolysis of dUTP to dUMP without releasing the toxic dUTP intermediate. In Acidothermus cellulolyticus (strain ATCC 43068 / DSM 8971 / 11B), this protein is dCTP deaminase, dUMP-forming.